The sequence spans 218 residues: Phosphoglycolate phosphatase (218 aa).

Asp7 serves as the catalytic Nucleophile. Mg(2+) contacts are provided by Asp7, Asp9, and Asp167.

Belongs to the HAD-like hydrolase superfamily. CbbY/CbbZ/Gph/YieH family. Requires Mg(2+) as cofactor.

It carries out the reaction 2-phosphoglycolate + H2O = glycolate + phosphate. It participates in organic acid metabolism; glycolate biosynthesis; glycolate from 2-phosphoglycolate: step 1/1. Functionally, specifically catalyzes the dephosphorylation of 2-phosphoglycolate. Is involved in the dissimilation of the intracellular 2-phosphoglycolate formed during the DNA repair of 3'-phosphoglycolate ends, a major class of DNA lesions induced by oxidative stress. The sequence is that of Phosphoglycolate phosphatase from Cereibacter sphaeroides (Rhodobacter sphaeroides).